A 913-amino-acid chain; its full sequence is Chitin synthase 1 (913 aa).

The tract at residues 1–27 (MSGAPPPSSGFAPRSYGQQPLSHAPRS) is disordered. Positions 237, 241, and 291 each coordinate UDP-N-acetyl-alpha-D-glucosamine. Residue asparagine 420 is glycosylated (N-linked (GlcNAc...) asparagine). Residue aspartate 496 is part of the active site. Residue asparagine 510 is glycosylated (N-linked (GlcNAc...) asparagine). 6 helical membrane-spanning segments follow: residues 539–559 (WLNG…RIYS), 581–601 (YTAF…FIVF), 625–645 (AVYI…IIGL), 658–678 (FVGA…AGIF), 684–704 (TVHS…ASAL), and 711–731 (IFMT…IFTI). Positions 741 to 743 (SWG) match the Conserved SWG motif motif. Helical transmembrane passes span 800–820 (VLLT…YFAS) and 825–845 (MPVL…GSIG). Asparagine 867 and asparagine 900 each carry an N-linked (GlcNAc...) asparagine glycan.

It belongs to the chitin synthase family. Class II subfamily. In terms of assembly, homodimer. The cofactor is Mn(2+).

It localises to the cell membrane. It catalyses the reaction [(1-&gt;4)-N-acetyl-beta-D-glucosaminyl](n) + UDP-N-acetyl-alpha-D-glucosamine = [(1-&gt;4)-N-acetyl-beta-D-glucosaminyl](n+1) + UDP + H(+). With respect to regulation, the activity is inhibited by nikkomycin Z (NikZ). Its function is as follows. Polymerizes chitin, a structural polymer of the cell wall and septum, by transferring the sugar moiety of UDP-GlcNAc to the non-reducing end of the growing chitin polymer. Involved in mycelial growth, sporangial production, zoospore release and pathogenesis. The sequence is that of Chitin synthase 1 from Phytophthora sojae (strain P6497) (Soybean stem and root rot agent).